A 449-amino-acid polypeptide reads, in one-letter code: Glucose-6-phosphate isomerase (449 aa).

The active-site Proton donor is Glu291. Residues His312 and Lys426 contribute to the active site.

The protein belongs to the GPI family.

The protein resides in the cytoplasm. The catalysed reaction is alpha-D-glucose 6-phosphate = beta-D-fructose 6-phosphate. Its pathway is carbohydrate biosynthesis; gluconeogenesis. The protein operates within carbohydrate degradation; glycolysis; D-glyceraldehyde 3-phosphate and glycerone phosphate from D-glucose: step 2/4. Functionally, catalyzes the reversible isomerization of glucose-6-phosphate to fructose-6-phosphate. The chain is Glucose-6-phosphate isomerase from Streptococcus pyogenes serotype M18 (strain MGAS8232).